The following is a 162-amino-acid chain: Photosystem II extrinsic protein V (162 aa).

The first 26 residues, 1–26 (MFNKNFWTSIIIGCLFCTITYSGVNA), serve as a signal peptide directing secretion. Heme c contacts are provided by Cys62, Cys65, His66, and His117.

The protein belongs to the cytochrome c family. PsbV subfamily. In terms of assembly, PSII is composed of 1 copy each of membrane proteins PsbA, PsbB, PsbC, PsbD, PsbE, PsbF, PsbH, PsbI, PsbJ, PsbK, PsbL, PsbM, PsbT, PsbX, PsbY, PsbZ, Psb30/Ycf12, at least 3 peripheral proteins of the oxygen-evolving complex and a large number of cofactors. It forms dimeric complexes. It depends on heme c as a cofactor.

It localises to the plastid. Its subcellular location is the cyanelle thylakoid membrane. Functionally, one of the extrinsic, lumenal subunits of photosystem II (PSII). PSII is a light-driven water plastoquinone oxidoreductase, using light energy to abstract electrons from H(2)O, generating a proton gradient subsequently used for ATP formation. The extrinsic proteins stabilize the structure of photosystem II oxygen-evolving complex (OEC), the ion environment of oxygen evolution and protect the OEC against heat-induced inactivation. The chain is Photosystem II extrinsic protein V from Cyanophora paradoxa.